A 1378-amino-acid chain; its full sequence is S-cell enriched with leucine-rich repeat-containing protein slrA (1378 aa).

Residues 17–37 traverse the membrane as a helical segment; that stretch reads IFKILYCYLFTSLLLILSTWV. 5 N-linked (GlcNAc...) asparagine glycosylation sites follow: asparagine 59, asparagine 112, asparagine 143, asparagine 172, and asparagine 201. LRR repeat units lie at residues 143–165, 167–188, 191–212, 213–235, 236–257, 260–281, 282–304, 307–329, and 331–353; these read NLTG…LPYL, HLRN…GLLK, SLVA…ADSK, AISY…WKTP, NLLF…EFFR, SLDY…LSKS, RISY…TCWK, SLRI…IFDH, and PLQY…LDCA. N-linked (GlcNAc...) asparagine glycans are attached at residues asparagine 265, asparagine 287, and asparagine 296. N-linked (GlcNAc...) asparagine glycosylation is found at asparagine 416, asparagine 436, asparagine 451, asparagine 491, asparagine 513, asparagine 596, asparagine 605, asparagine 634, asparagine 704, asparagine 710, asparagine 740, asparagine 741, asparagine 771, asparagine 788, asparagine 801, asparagine 826, asparagine 843, asparagine 861, asparagine 875, and asparagine 907. Residues 886–946 are a coiled coil; the sequence is SLNNNNNNNN…NNNENNNENK (61 aa). Residues 891-909 are compositionally biased toward low complexity; that stretch reads NNNNNNNNNKNNNNNNNDS. The segment at 891-945 is disordered; it reads NNNNNNNNNKNNNNNNNDSNNEKEVVEDEEEDLDYSSQNDNNNINNNNNENNNEN. Positions 915-924 are enriched in acidic residues; that stretch reads VVEDEEEDLD. Residues 929–945 are compositionally biased toward low complexity; that stretch reads NDNNNINNNNNENNNEN. 4 N-linked (GlcNAc...) asparagine glycosylation sites follow: asparagine 953, asparagine 970, asparagine 1090, and asparagine 1100. Residues 1160–1180 form a helical membrane-spanning segment; the sequence is YYIVFFGCASGLILVLVICIV. A compositionally biased stretch (low complexity) spans 1227–1276; it reads DLNNNNNNNNNNNNNNNNNNNNNNNNNNNNNNNNNFNDGSDTFNNNNKKN. The segment at 1227–1378 is disordered; it reads DLNNNNNNNN…KKHLTIINKK (152 aa). Residues 1289–1304 are compositionally biased toward basic and acidic residues; it reads DGKENDIKNINNKKDE. Over residues 1305–1324 the composition is skewed to acidic residues; that stretch reads KEDDGDDDDDEDDDEYEDDT. Low complexity predominate over residues 1328–1353; the sequence is SSGNSSRSKGSDGGSSSNSLSSDKQS. Asparagine 1331 and asparagine 1360 each carry an N-linked (GlcNAc...) asparagine glycan. The span at 1354–1364 shows a compositional bias: polar residues; the sequence is FNNGNENNSII. Basic residues predominate over residues 1368–1378; sequence KKKHLTIINKK.

It localises to the membrane. The polypeptide is S-cell enriched with leucine-rich repeat-containing protein slrA (slrA) (Dictyostelium discoideum (Social amoeba)).